Here is a 315-residue protein sequence, read N- to C-terminus: Acetyl-coenzyme A carboxylase carboxyl transferase subunit alpha (315 aa).

The 258-residue stretch at 32-289 (EIDLLEASLE…KQAFVDQLEQ (258 aa)) folds into the CoA carboxyltransferase C-terminal domain.

It belongs to the AccA family. In terms of assembly, acetyl-CoA carboxylase is a heterohexamer composed of biotin carboxyl carrier protein (AccB), biotin carboxylase (AccC) and two subunits each of ACCase subunit alpha (AccA) and ACCase subunit beta (AccD).

Its subcellular location is the cytoplasm. The enzyme catalyses N(6)-carboxybiotinyl-L-lysyl-[protein] + acetyl-CoA = N(6)-biotinyl-L-lysyl-[protein] + malonyl-CoA. It participates in lipid metabolism; malonyl-CoA biosynthesis; malonyl-CoA from acetyl-CoA: step 1/1. Its function is as follows. Component of the acetyl coenzyme A carboxylase (ACC) complex. First, biotin carboxylase catalyzes the carboxylation of biotin on its carrier protein (BCCP) and then the CO(2) group is transferred by the carboxyltransferase to acetyl-CoA to form malonyl-CoA. The protein is Acetyl-coenzyme A carboxylase carboxyl transferase subunit alpha of Staphylococcus haemolyticus (strain JCSC1435).